The following is a 129-amino-acid chain: Large ribosomal subunit protein bL19 (129 aa).

This sequence belongs to the bacterial ribosomal protein bL19 family.

This protein is located at the 30S-50S ribosomal subunit interface and may play a role in the structure and function of the aminoacyl-tRNA binding site. This is Large ribosomal subunit protein bL19 from Granulibacter bethesdensis (strain ATCC BAA-1260 / CGDNIH1).